Here is a 148-residue protein sequence, read N- to C-terminus: Small ribosomal subunit protein bS16 (148 aa).

Low complexity predominate over residues 111–122 (AAAGEEPVAEAT). The disordered stretch occupies residues 111–148 (AAAGEEPVAEATTPKKKGGKKAEAEDKAEEQKSEEGQA). Residues 130 to 148 (KKAEAEDKAEEQKSEEGQA) show a composition bias toward basic and acidic residues.

Belongs to the bacterial ribosomal protein bS16 family.

The sequence is that of Small ribosomal subunit protein bS16 from Saccharopolyspora erythraea (strain ATCC 11635 / DSM 40517 / JCM 4748 / NBRC 13426 / NCIMB 8594 / NRRL 2338).